The chain runs to 213 residues: uncharacterized protein (213 aa).

Catalysis depends on charge relay system residues S114, D162, and H194.

It belongs to the AB hydrolase superfamily. AB hydrolase 2 family.

This is an uncharacterized protein from Rickettsia bellii (strain RML369-C).